We begin with the raw amino-acid sequence, 261 residues long: Protein FAM216A (261 aa).

Residues 1 to 52 (MPSRCPGVAGPPALARTEGSEGSAGQSYHQNSKGTGEQHKAERIKEGHRMSS) form a disordered region. Residues 23-35 (SAGQSYHQNSKGT) show a composition bias toward polar residues. Residues 36–49 (GEQHKAERIKEGHR) show a composition bias toward basic and acidic residues.

It belongs to the FAM216 family.

This is Protein FAM216A (Fam216a) from Rattus norvegicus (Rat).